A 284-amino-acid polypeptide reads, in one-letter code: uncharacterized protein (284 aa).

A helical membrane pass occupies residues 12–32 (ILFILFVVAFCVYLVPRVAIN).

Belongs to the serine esterase family.

It localises to the membrane. This is an uncharacterized protein from Escherichia coli (strain K12).